Reading from the N-terminus, the 52-residue chain is Large ribosomal subunit protein bL33 (52 aa).

Belongs to the bacterial ribosomal protein bL33 family.

This is Large ribosomal subunit protein bL33 from Helicobacter pylori (strain HPAG1).